The chain runs to 344 residues: Fe-S cluster assembly protein DRE2 (344 aa).

The segment at 1–160 (MTSNILLLLH…KKLNNDNAST (160 aa)) is N-terminal SAM-like domain. The interval 154–179 (NNDNASTPGLTDSSAGTSEDETATVS) is disordered. The span at 155-170 (NDNASTPGLTDSSAGT) shows a compositional bias: polar residues. Positions 161 to 223 (PGLTDSSAGT…NDLIAESNKY (63 aa)) are linker. Residues Cys-231, Cys-243, Cys-246, and Cys-248 each contribute to the [2Fe-2S] cluster site. The interval 231–248 (CELPNGKKRKKACKDCTC) is fe-S binding site A. Residues Cys-313, Cys-316, Cys-324, and Cys-327 each coordinate [4Fe-4S] cluster. Short sequence motifs (cx2C motif) lie at residues 313-316 (CGSC) and 324-327 (CDGC). The interval 313 to 327 (CGSCSLGDAFRCDGC) is fe-S binding site B.

The protein belongs to the anamorsin family. In terms of assembly, monomer. Interacts with TAH18. Interacts with MIA40. [2Fe-2S] cluster is required as a cofactor. It depends on [4Fe-4S] cluster as a cofactor.

The protein localises to the cytoplasm. The protein resides in the mitochondrion intermembrane space. In terms of biological role, component of the cytosolic iron-sulfur (Fe-S) protein assembly (CIA) machinery required for the maturation of extramitochondrial Fe-S proteins. Part of an electron transfer chain functioning in an early step of cytosolic Fe-S biogenesis, facilitating the de novo assembly of a [4Fe-4S] cluster on the scaffold complex CFD1-NBP35. Electrons are transferred to DRE2 from NADPH via the FAD- and FMN-containing protein TAH18. TAH18-DRE2 are also required for the assembly of the diferric tyrosyl radical cofactor of ribonucleotide reductase (RNR), probably by providing electrons for reduction during radical cofactor maturation in the catalytic small subunit RNR2. In Candida tropicalis (strain ATCC MYA-3404 / T1) (Yeast), this protein is Fe-S cluster assembly protein DRE2.